The following is a 118-amino-acid chain: Small ribosomal subunit protein uS13 (118 aa).

The segment at 94 to 118 (GLPVRGQRTKTNARTRKGPRKPIKK) is disordered.

This sequence belongs to the universal ribosomal protein uS13 family. As to quaternary structure, part of the 30S ribosomal subunit. Forms a loose heterodimer with protein S19. Forms two bridges to the 50S subunit in the 70S ribosome.

Located at the top of the head of the 30S subunit, it contacts several helices of the 16S rRNA. In the 70S ribosome it contacts the 23S rRNA (bridge B1a) and protein L5 of the 50S subunit (bridge B1b), connecting the 2 subunits; these bridges are implicated in subunit movement. Contacts the tRNAs in the A and P-sites. The polypeptide is Small ribosomal subunit protein uS13 (Salmonella paratyphi A (strain ATCC 9150 / SARB42)).